Consider the following 576-residue polypeptide: Acyl-CoA ligase sidI (576 aa).

The PTS2-type peroxisomal targeting signal motif lies at Pro3 to Pro11. Asp439, Arg454, and Lys553 together coordinate ATP.

Belongs to the ATP-dependent AMP-binding enzyme family.

It is found in the peroxisome. It participates in siderophore biosynthesis. In terms of biological role, acyl-CoA ligase; part of the gene cluster that mediates the biosynthesis of at least 11 siderophores, including beauverichelin A, dimerumic acid (DA), Na-dimethyl coprogen (NADC), eleutherazine B, ferricrocin (FC), fusarinine A, fusarinine C (FsC), metachelin A, mevalonolactone, rhodotorulic acid (RA) and tenellin. This cocktail of siderophores for iron metabolism is essential for virulence, and more specifically for the fungal virulence in penetrating through the host cuticle. Siderophore synthesis is also involved in conidial germination under iron-deficient conditions. For biosynthesis of fusarinine C, the transacylase SIDF transfers anhydromevalonyl to N(5)-hydroxyornithine. The required anhydromevalonyl-CoA moiety is derived from mevalonate by CoA ligation and dehydration catalyzed by SIDI and sidH respectively. The chain is Acyl-CoA ligase sidI from Beauveria bassiana (strain ARSEF 2860) (White muscardine disease fungus).